Reading from the N-terminus, the 1286-residue chain is DNA-directed RNA polymerase 147 kDa polypeptide (1286 aa).

It belongs to the poxviridae DNA-directed RNA polymerase 147 kDa subunit family. In terms of assembly, the DNA-dependent RNA polymerase used for intermediate and late genes expression consists of eight subunits Rpo30/OPG66, Rpo7/OPG90, Rpo22/OPG103, Rpo147/OPG105, Rpo18/OPG119, Rpo19/OPG131, Rpo132/OPG151 and Rpo35/OPG156. The same holoenzyme, with the addition of the transcription-specificity factor OPG109, is used for early gene expression.

The protein resides in the virion. It catalyses the reaction RNA(n) + a ribonucleoside 5'-triphosphate = RNA(n+1) + diphosphate. Part of the DNA-dependent RNA polymerase which catalyzes the transcription of viral DNA into RNA using the four ribonucleoside triphosphates as substrates. Responsible for the transcription of early, intermediate and late genes. DNA-dependent RNA polymerase associates with the early transcription factor (ETF), itself composed of OPG118 and OPG133, thereby allowing the early genes transcription. Late transcription, and probably also intermediate transcription, require newly synthesized RNA polymerase. The protein is DNA-directed RNA polymerase 147 kDa polypeptide (OPG105) of Vaccinia virus (strain Ankara) (VACV).